A 73-amino-acid polypeptide reads, in one-letter code: Conotoxin MaI51 (73 aa).

An N-terminal signal peptide occupies residues 1–19; the sequence is MQKLTILLLVAAVLLSTQA. Positions 20–41 are excised as a propeptide; that stretch reads LNQEKRPKEMINVLSKGKTNAE. Residue Q46 is modified to Pyrrolidone carboxylic acid. Cystine bridges form between C47–C61, C54–C65, and C60–C69. Residue I72 is modified to Isoleucine amide.

The protein belongs to the conotoxin O2 superfamily. In terms of tissue distribution, expressed by the venom duct.

The protein resides in the secreted. This chain is Conotoxin MaI51, found in Conus marmoreus (Marble cone).